The primary structure comprises 332 residues: uncharacterized protein (332 aa).

This sequence belongs to the herpesviridae BBRF2 family.

This is an uncharacterized protein from Bos taurus (Bovine).